Consider the following 425-residue polypeptide: Type I restriction enzyme MjaVII specificity subunit (425 aa).

A target recognition domain 1 region spans residues 9–168; it reads KKTEIGEIPE…KSFKIPLPPL (160 aa). Positions 169 to 208 are central conserved region (CCR); sequence EEQKQIAKILTKIDEGIEIIEKSINKLERIKKGLMHKLLT. Residues 169-208 adopt a coiled-coil conformation; it reads EEQKQIAKILTKIDEGIEIIEKSINKLERIKKGLMHKLLT. Residues 209–368 are target recognition domain 2; the sequence is KGIGHSRFKK…TFKELSKSML (160 aa). A coiled-coil region spans residues 369-418; the sequence is ENFKIPLPPLEEQKQIAKILSSVDKSIELKKQKKEKLQRMKKKIMELLLT. The interval 369-418 is distal conserved region (DCR); the sequence is ENFKIPLPPLEEQKQIAKILSSVDKSIELKKQKKEKLQRMKKKIMELLLT.

The protein belongs to the type-I restriction system S methylase family. In terms of assembly, the type I restriction/modification system is composed of three polypeptides R, M and S.

The specificity (S) subunit of a type I restriction enzyme; this subunit dictates DNA sequence specificity. The M and S subunits together form a methyltransferase (MTase) that methylates A-3 on the top and bottom strands of the sequence 5'-CAAN(7)TGG-3'. In the presence of the R subunit the complex can also act as an endonuclease, binding to the same target sequence but cutting the DNA some distance from this site. Whether the DNA is cut or modified depends on the methylation state of the target sequence. When the target site is unmodified, the DNA is cut. When the target site is hemimethylated, the complex acts as a maintenance MTase modifying the DNA so that both strands become methylated. After locating a non-methylated recognition site, the enzyme complex serves as a molecular motor that translocates DNA in an ATP-dependent manner until a collision occurs that triggers cleavage. The sequence is that of Type I restriction enzyme MjaVII specificity subunit from Methanocaldococcus jannaschii (strain ATCC 43067 / DSM 2661 / JAL-1 / JCM 10045 / NBRC 100440) (Methanococcus jannaschii).